Here is an 823-residue protein sequence, read N- to C-terminus: ATP-dependent RNA helicase HrpA (823 aa).

Residues Ile16–Glu179 enclose the Helicase ATP-binding domain. Residue Ser29 to Thr36 participates in ATP binding. The DEAH box motif lies at Asp126–His129. Positions Lys203–Gly374 constitute a Helicase C-terminal domain.

This sequence belongs to the DEAD box helicase family. DEAH subfamily.

The enzyme catalyses ATP + H2O = ADP + phosphate + H(+). Has RNA-stimulated ATPase activity and RNA helicase activity. Involved in global regulation of gene expression. Could be involved in RNA processing and post-transcriptional gene regulation. Essential for both tick transmission and mouse infection. The chain is ATP-dependent RNA helicase HrpA from Borreliella burgdorferi (strain ATCC 35210 / DSM 4680 / CIP 102532 / B31) (Borrelia burgdorferi).